The chain runs to 367 residues: Glutamate 5-kinase (367 aa).

ATP is bound at residue K10. Substrate is bound by residues S50, D137, and N149. Residues 169–170 and 211–217 contribute to the ATP site; these read TD and TGGMGTK. The 79-residue stretch at 275-353 folds into the PUA domain; it reads AGEITVDEGA…QQIDAILGYE (79 aa).

The protein belongs to the glutamate 5-kinase family.

It localises to the cytoplasm. It carries out the reaction L-glutamate + ATP = L-glutamyl 5-phosphate + ADP. It participates in amino-acid biosynthesis; L-proline biosynthesis; L-glutamate 5-semialdehyde from L-glutamate: step 1/2. Its function is as follows. Catalyzes the transfer of a phosphate group to glutamate to form L-glutamate 5-phosphate. The protein is Glutamate 5-kinase of Citrobacter koseri (strain ATCC BAA-895 / CDC 4225-83 / SGSC4696).